The following is a 32-amino-acid chain: Toxic phospholipase A2 (32 aa).

It belongs to the phospholipase A2 family. Group III subfamily. Ca(2+) serves as cofactor.

The protein localises to the secreted. It is found in the nematocyst. It carries out the reaction a 1,2-diacyl-sn-glycero-3-phosphocholine + H2O = a 1-acyl-sn-glycero-3-phosphocholine + a fatty acid + H(+). PLA2 catalyzes the calcium-dependent hydrolysis of the 2-acyl groups in 3-sn-phosphoglycerides. This is Toxic phospholipase A2 from Rhopilema nomadica (Mediteranean medusa).